The following is a 72-amino-acid chain: ATP synthase subunit c (72 aa).

2 helical membrane-spanning segments follow: residues 5–25 (LLAAGIAVLAGIGAGIGIGIA) and 51–71 (AGLSEATAIYGLVVSIILLFV).

Belongs to the ATPase C chain family. F-type ATPases have 2 components, F(1) - the catalytic core - and F(0) - the membrane proton channel. F(1) has five subunits: alpha(3), beta(3), gamma(1), delta(1), epsilon(1). F(0) has three main subunits: a(1), b(2) and c(10-14). The alpha and beta chains form an alternating ring which encloses part of the gamma chain. F(1) is attached to F(0) by a central stalk formed by the gamma and epsilon chains, while a peripheral stalk is formed by the delta and b chains.

The protein resides in the cell membrane. Its function is as follows. F(1)F(0) ATP synthase produces ATP from ADP in the presence of a proton or sodium gradient. F-type ATPases consist of two structural domains, F(1) containing the extramembraneous catalytic core and F(0) containing the membrane proton channel, linked together by a central stalk and a peripheral stalk. During catalysis, ATP synthesis in the catalytic domain of F(1) is coupled via a rotary mechanism of the central stalk subunits to proton translocation. Key component of the F(0) channel; it plays a direct role in translocation across the membrane. A homomeric c-ring of between 10-14 subunits forms the central stalk rotor element with the F(1) delta and epsilon subunits. The polypeptide is ATP synthase subunit c (Clostridium perfringens (strain ATCC 13124 / DSM 756 / JCM 1290 / NCIMB 6125 / NCTC 8237 / Type A)).